The sequence spans 210 residues: Probable GTP-binding protein EngB (210 aa).

In terms of domain architecture, EngB-type G spans 25 to 199; the sequence is TGIEVAFAGR…RQKLDTWFNE (175 aa). Residues 33-40, 60-64, 78-81, 145-148, and 178-180 each bind GTP; these read GRSNAGKS, GRTQL, DLPG, TKAD, and FSS. The Mg(2+) site is built by Ser40 and Thr62.

The protein belongs to the TRAFAC class TrmE-Era-EngA-EngB-Septin-like GTPase superfamily. EngB GTPase family. Requires Mg(2+) as cofactor.

Its function is as follows. Necessary for normal cell division and for the maintenance of normal septation. The polypeptide is Probable GTP-binding protein EngB (Escherichia coli O157:H7).